Consider the following 1380-residue polypeptide: Respiration factor 2 (1380 aa).

C2H2-type zinc fingers lie at residues 151–173 and 179–202; these read FLCP…QHSH and YLCI…QKLH. The tract at residues 208 to 231 is disordered; that stretch reads TGDPRRMTPAPNSTSSFASKRRHS. Phosphoserine occurs at positions 231 and 322. 4 disordered regions span residues 413–445, 544–584, 624–643, and 652–688; these read NLNL…NSNN, SPKN…NIDP, SRSS…SLNH, and LNLS…KRRR. The span at 424-445 shows a compositional bias: low complexity; it reads QQQQQQQQQQNSTSSTIVNSNN. S544 carries the phosphoserine modification. The span at 544–569 shows a compositional bias: polar residues; it reads SPKNPPTTVSDSSSTINFNPGTNNLL. A compositionally biased stretch (basic and acidic residues) spans 575 to 584; that stretch reads PNDKDSNIDP. Over residues 624 to 634 the composition is skewed to low complexity; that stretch reads SRSSIPNKSPP. Residue S632 is modified to Phosphoserine. Residues 652–681 show a composition bias toward polar residues; sequence LNLSLNGSTDLPSTPQNQLKEPSYSDPISH.

It belongs to the RSF2/TDA9 family.

Its subcellular location is the nucleus. Its function is as follows. Transcription factor that regulates expression of both nuclear and mitochondrial genes, and more specifically those required for glycerol-based growth and respiration. In Saccharomyces cerevisiae (strain ATCC 204508 / S288c) (Baker's yeast), this protein is Respiration factor 2 (RSF2).